Consider the following 309-residue polypeptide: tRNA dimethylallyltransferase (309 aa).

9–16 (GPTAVGKT) lines the ATP pocket. A substrate-binding site is contributed by 11 to 16 (TAVGKT). An interaction with substrate tRNA region spans residues 34-37 (DSMQ).

The protein belongs to the IPP transferase family. As to quaternary structure, monomer. Requires Mg(2+) as cofactor.

It catalyses the reaction adenosine(37) in tRNA + dimethylallyl diphosphate = N(6)-dimethylallyladenosine(37) in tRNA + diphosphate. Its function is as follows. Catalyzes the transfer of a dimethylallyl group onto the adenine at position 37 in tRNAs that read codons beginning with uridine, leading to the formation of N6-(dimethylallyl)adenosine (i(6)A). The chain is tRNA dimethylallyltransferase from Enterococcus faecalis (strain ATCC 700802 / V583).